Reading from the N-terminus, the 353-residue chain is Vomeronasal type-1 receptor 1 (353 aa).

Over 1–56 (MVGDTLKLLSPLMTRYFFLLFYSTDSSDLNENQHPLDFDEMAFGKVKSGISFLIQT) the chain is Extracellular. A helical membrane pass occupies residues 57–77 (GVGILGNSFLLCFYNLILFTG). The Cytoplasmic segment spans residues 78-84 (HKLRPTD). A helical membrane pass occupies residues 85 to 105 (LILSQLALANSMVLFFKGIPQ). Over 106-132 (TMAAFGLKYLLNDTGCKFVFYYHRVGT) the chain is Extracellular. Asparagine 117 is a glycosylation site (N-linked (GlcNAc...) asparagine). The helical transmembrane segment at 133-153 (RVSLSTICLLNGFQAIKLNPS) threads the bilayer. Topologically, residues 154-169 (ICRWMEIKIRSPRFID) are cytoplasmic. A helical transmembrane segment spans residues 170 to 190 (FCCLLCWAPHVLMNASVLLLV). The Extracellular segment spans residues 191-226 (NGPLNSKNSSAKNNYGYCSYKASKRFSSLHAVLYFS). N-linked (GlcNAc...) asparagine glycosylation is present at asparagine 198. The chain crosses the membrane as a helical span at residues 227–247 (PDFMSLGFMVWASGSMVFFLY). Topologically, residues 248–274 (RHKQQVQHNHSNRLSCRPSQEARATHT) are cytoplasmic. A helical transmembrane segment spans residues 275–295 (IMVLVSSFFVFYSVHSFLTIW). The Extracellular portion of the chain corresponds to 296–303 (TTVVANPG). A helical membrane pass occupies residues 304–324 (QWIVTNSVLVASCFPARSPFV). The Cytoplasmic segment spans residues 325–353 (LIMSDTHISQFCFACRTRKTLFPNLVVMP).

This sequence belongs to the G-protein coupled receptor 1 family. In terms of tissue distribution, expressed in the olfactory mucosa, very low expression in brain, lung and kidney.

The protein localises to the cell membrane. Its function is as follows. Putative pheromone receptor. In Homo sapiens (Human), this protein is Vomeronasal type-1 receptor 1 (VN1R1).